Reading from the N-terminus, the 290-residue chain is Acetyl-coenzyme A carboxylase carboxyl transferase subunit beta (290 aa).

Residues 28-290 (IMTKCPKCKK…TGGEYEWLQD (263 aa)) enclose the CoA carboxyltransferase N-terminal domain. Zn(2+) contacts are provided by cysteine 32, cysteine 35, cysteine 51, and cysteine 54. The C4-type zinc-finger motif lies at 32–54 (CPKCKKIMLTKELDKNLRVCMNC).

This sequence belongs to the AccD/PCCB family. Acetyl-CoA carboxylase is a heterohexamer composed of biotin carboxyl carrier protein (AccB), biotin carboxylase (AccC) and two subunits each of ACCase subunit alpha (AccA) and ACCase subunit beta (AccD). Zn(2+) serves as cofactor.

It is found in the cytoplasm. The catalysed reaction is N(6)-carboxybiotinyl-L-lysyl-[protein] + acetyl-CoA = N(6)-biotinyl-L-lysyl-[protein] + malonyl-CoA. Its pathway is lipid metabolism; malonyl-CoA biosynthesis; malonyl-CoA from acetyl-CoA: step 1/1. Component of the acetyl coenzyme A carboxylase (ACC) complex. Biotin carboxylase (BC) catalyzes the carboxylation of biotin on its carrier protein (BCCP) and then the CO(2) group is transferred by the transcarboxylase to acetyl-CoA to form malonyl-CoA. The polypeptide is Acetyl-coenzyme A carboxylase carboxyl transferase subunit beta (Bacillus velezensis (strain DSM 23117 / BGSC 10A6 / LMG 26770 / FZB42) (Bacillus amyloliquefaciens subsp. plantarum)).